A 506-amino-acid polypeptide reads, in one-letter code: AMP phosphorylase (506 aa).

AMP-binding positions include Gly167, 193–198 (SRAITG), and Thr202. Asp255 (proton donor) is an active-site residue. AMP-binding residues include Ser263 and Lys287.

The protein belongs to the thymidine/pyrimidine-nucleoside phosphorylase family. Type 2 subfamily.

The enzyme catalyses AMP + phosphate = alpha-D-ribose 1,5-bisphosphate + adenine. It catalyses the reaction CMP + phosphate = cytosine + alpha-D-ribose 1,5-bisphosphate. It carries out the reaction UMP + phosphate = alpha-D-ribose 1,5-bisphosphate + uracil. Catalyzes the conversion of AMP and phosphate to adenine and ribose 1,5-bisphosphate (R15P). Exhibits phosphorylase activity toward CMP and UMP in addition to AMP. Functions in an archaeal AMP degradation pathway, together with R15P isomerase and RubisCO. In Methanosarcina acetivorans (strain ATCC 35395 / DSM 2834 / JCM 12185 / C2A), this protein is AMP phosphorylase.